Here is a 407-residue protein sequence, read N- to C-terminus: Probable tRNA sulfurtransferase (407 aa).

Positions 61–165 (NEITYRLSKI…LDAIYMYEEV (105 aa)) constitute a THUMP domain. ATP is bound by residues 183–184 (ML), 208–209 (HF), R265, G287, and Q296.

This sequence belongs to the ThiI family.

It is found in the cytoplasm. The catalysed reaction is [ThiI sulfur-carrier protein]-S-sulfanyl-L-cysteine + a uridine in tRNA + 2 reduced [2Fe-2S]-[ferredoxin] + ATP + H(+) = [ThiI sulfur-carrier protein]-L-cysteine + a 4-thiouridine in tRNA + 2 oxidized [2Fe-2S]-[ferredoxin] + AMP + diphosphate. It catalyses the reaction [ThiS sulfur-carrier protein]-C-terminal Gly-Gly-AMP + S-sulfanyl-L-cysteinyl-[cysteine desulfurase] + AH2 = [ThiS sulfur-carrier protein]-C-terminal-Gly-aminoethanethioate + L-cysteinyl-[cysteine desulfurase] + A + AMP + 2 H(+). It functions in the pathway cofactor biosynthesis; thiamine diphosphate biosynthesis. Its function is as follows. Catalyzes the ATP-dependent transfer of a sulfur to tRNA to produce 4-thiouridine in position 8 of tRNAs, which functions as a near-UV photosensor. Also catalyzes the transfer of sulfur to the sulfur carrier protein ThiS, forming ThiS-thiocarboxylate. This is a step in the synthesis of thiazole, in the thiamine biosynthesis pathway. The sulfur is donated as persulfide by IscS. In Staphylococcus aureus (strain MSSA476), this protein is Probable tRNA sulfurtransferase.